A 367-amino-acid chain; its full sequence is Protein RecA (367 aa).

Over residues 1-14 the composition is skewed to polar residues; it reads MSTEVNANQSPNAE. Residues 1–24 form a disordered region; it reads MSTEVNANQSPNAESRQEAARSGE. Basic and acidic residues predominate over residues 15-24; sequence SRQEAARSGE. An ATP-binding site is contributed by 84 to 91; sequence GPESSGKT. The disordered stretch occupies residues 348–367; that stretch reads GSEVSSNSMRPLTTANRKAA. Residues 349 to 367 show a composition bias toward polar residues; sequence SEVSSNSMRPLTTANRKAA.

Belongs to the RecA family.

The protein resides in the cytoplasm. Functionally, can catalyze the hydrolysis of ATP in the presence of single-stranded DNA, the ATP-dependent uptake of single-stranded DNA by duplex DNA, and the ATP-dependent hybridization of homologous single-stranded DNAs. It interacts with LexA causing its activation and leading to its autocatalytic cleavage. The sequence is that of Protein RecA from Prochlorococcus marinus (strain MIT 9211).